The chain runs to 395 residues: Chorismate synthase (395 aa).

Residues Arg-40 and Arg-46 each coordinate NADP(+). FMN is bound by residues 137–139 (RSS), Gly-308, 323–327 (KPLPT), and Arg-349.

The protein belongs to the chorismate synthase family. Homotetramer. FMNH2 serves as cofactor.

It carries out the reaction 5-O-(1-carboxyvinyl)-3-phosphoshikimate = chorismate + phosphate. It participates in metabolic intermediate biosynthesis; chorismate biosynthesis; chorismate from D-erythrose 4-phosphate and phosphoenolpyruvate: step 7/7. Functionally, catalyzes the anti-1,4-elimination of the C-3 phosphate and the C-6 proR hydrogen from 5-enolpyruvylshikimate-3-phosphate (EPSP) to yield chorismate, which is the branch point compound that serves as the starting substrate for the three terminal pathways of aromatic amino acid biosynthesis. This reaction introduces a second double bond into the aromatic ring system. This Gloeobacter violaceus (strain ATCC 29082 / PCC 7421) protein is Chorismate synthase.